The chain runs to 518 residues: MLPTYFGTSNFLAAFAVWMGVVVLAFAIFCVRRLYFHPYSKYPGPLLGKLTNYYAVYHSWKGDQHIDMWRCHEKYGPYVRYGPNELSINTAAGLKEIYSHGRNFKKSVKYNAMVHQAANTLTTIDKRKHGKKRRLISQAFSDAAFRSYEETIQQKIAQLCTALRRRDDDSNEIVPDGNWGPAKNMSHWCDWFTFDVMCSVIFGVPWSSLTEKTYRNVPHLIEVSNVRVGCLIEAGGSKNMKIDKYLFPAAIAARNQFVKFVNDIIRQGMAMSAKGSLKGAFALLRDATDPETQEPLSFKELCGESATLVVAGTDTTSTALAASIYYLCNHPKVYERAVQEVRSTFQSRAEIGLGPKVNSCTYLRAVIEESMRLSPSAPGPLWRQADAGGATVDGQYIPQGLEAGTCVYAIQHHPEIYPQPFKFVPERWLGPEAVPEQYRSDYSPFAGFTPFSIGPRGCIGKPLAYIELTLTLCHILYAFDMRLPQGVNVNEDAEYQLALHITAAKEGPLVEFRPRTVV.

Residues phenylalanine 11 to valine 31 traverse the membrane as a helical segment. N-linked (GlcNAc...) asparagine glycosylation is present at asparagine 184. Cysteine 458 is a binding site for heme.

Belongs to the cytochrome P450 family. Heme serves as cofactor.

Its subcellular location is the membrane. Its pathway is secondary metabolite biosynthesis. In terms of biological role, cytochrome P450 monooxygenase; part of the gene cluster that mediates the biosynthesis of aspercryptins, linear lipopeptides built from six amino acids including 2 highly unusual and nonproteogenic amino acids, 2-amino-octanoic acid (2aoa) and 2-amino-dodecanol (2adol). The core structure of aspercryptins is as follows: Ser/Ala-Thr-Ile/Val-2aoa-Asn-2adol. The first step of aspercryptin biosynthesis is the generation of the fatty acid precursors, octanoic and dodecanoic acids, by the FAS subunits atnF and atnM. The fatty acid precursors are likely transformed into the corresponding alpha-amino fatty acids in three steps. First, they are hydroxylated by the cytochrome P450 monooxygenase atnE, then oxidized to the corresponding alpha-keto acids by the NAD(P)-dependent oxidoreductase atnD, and finally converted to the alpha-amino fatty acids by the PLP-dependent aminotransferases atnH or atnJ. the alpha-amino fatty acids, 2-amino-octanoic and 2-amino-dodecanoic acids, are recognized, activated, and covalently tethered to the NRPS atnA by its fourth and sixth adenylation domains. The second module of atnA is the Thr module and contains an epimerase (E) domain responsible for the epimerization of Thr to D-allo-Thr. Additionally, despite atnA having only one epimerase domain, the first amino acid of aspercryptin A1 is D-Ser, suggesting that serine is either loaded directly as D-Ser on the first module or that the epimerase domain in the threonine module epimerizes both L-Ser and L-Thr. After condensation of the hexapeptide of aspercryptin, the C-terminal reductase (TE) domain might be involved in the reductive release and production of the aldehyde hexapeptide. Further reduction would generate aspercryptins. The variety of aspercryptins produced reflects the flexibility of the atnA NRPS, allowing incorporation of alanine instead of serine, valine for isoleucine, and a C10 fatty amino alcohol instead of the C12 version. AtnB seems to be involved in the selectivity for Ile versus Val by the third module. Moreover, type B, C and D aspercryptins have an additional N-terminal cichorine, acetyl and propionyl group respectively. This Emericella nidulans (strain FGSC A4 / ATCC 38163 / CBS 112.46 / NRRL 194 / M139) (Aspergillus nidulans) protein is Cytochrome P450 monooxygenase atnE.